The chain runs to 485 residues: Ribulose bisphosphate carboxylase large chain (485 aa).

Asn124 and Thr174 together coordinate substrate. The Proton acceptor role is filled by Lys176. Residue Lys178 coordinates substrate. Residues Lys202, Asp204, and Glu205 each coordinate Mg(2+). Lys202 carries the post-translational modification N6-carboxylysine. His294 serves as the catalytic Proton acceptor. Substrate contacts are provided by Arg295, His327, and Ser379.

The protein belongs to the RuBisCO large chain family. Type I subfamily. Heterohexadecamer of 8 large chains and 8 small chains. The cofactor is Mg(2+).

The enzyme catalyses 2 (2R)-3-phosphoglycerate + 2 H(+) = D-ribulose 1,5-bisphosphate + CO2 + H2O. The catalysed reaction is D-ribulose 1,5-bisphosphate + O2 = 2-phosphoglycolate + (2R)-3-phosphoglycerate + 2 H(+). Its function is as follows. RuBisCO catalyzes two reactions: the carboxylation of D-ribulose 1,5-bisphosphate, the primary event in carbon dioxide fixation, as well as the oxidative fragmentation of the pentose substrate in the photorespiration process. Both reactions occur simultaneously and in competition at the same active site. This is Ribulose bisphosphate carboxylase large chain from Rhodopseudomonas palustris (strain BisB18).